A 71-amino-acid polypeptide reads, in one-letter code: NAD(P)H-quinone oxidoreductase subunit O (71 aa).

The protein belongs to the complex I NdhO subunit family. In terms of assembly, NDH-1 can be composed of about 15 different subunits; different subcomplexes with different compositions have been identified which probably have different functions.

The protein resides in the cellular thylakoid membrane. It catalyses the reaction a plastoquinone + NADH + (n+1) H(+)(in) = a plastoquinol + NAD(+) + n H(+)(out). It carries out the reaction a plastoquinone + NADPH + (n+1) H(+)(in) = a plastoquinol + NADP(+) + n H(+)(out). Functionally, NDH-1 shuttles electrons from an unknown electron donor, via FMN and iron-sulfur (Fe-S) centers, to quinones in the respiratory and/or the photosynthetic chain. The immediate electron acceptor for the enzyme in this species is believed to be plastoquinone. Couples the redox reaction to proton translocation, and thus conserves the redox energy in a proton gradient. Cyanobacterial NDH-1 also plays a role in inorganic carbon-concentration. In Microcystis aeruginosa (strain NIES-843 / IAM M-2473), this protein is NAD(P)H-quinone oxidoreductase subunit O.